A 726-amino-acid chain; its full sequence is NHL repeat-containing protein 2 (726 aa).

The 158-residue stretch at 43–200 (QKVDGWEQDL…TSIALKYYKD (158 aa)) folds into the Thioredoxin domain. 6 NHL repeats span residues 212 to 254 (KLYK…VWKN), 265 to 307 (NPGR…IDLE), 335 to 369 (ISSP…IWAL), 409 to 439 (FAQP…VRTV), 461 to 505 (AFGD…VDPK), and 518 to 562 (TNNV…MDLE).

As to quaternary structure, monomer. In terms of tissue distribution, ubiquitous. Detected in heart, kidney, muscle, brain, lung, liver and in skin fibroblasts (at protein level).

The protein resides in the cytoplasm. Its subcellular location is the cytosol. In terms of biological role, required for normal embryonic development. This is NHL repeat-containing protein 2 (NHLRC2) from Homo sapiens (Human).